The primary structure comprises 244 residues: Salivary antigen-5 (244 aa).

An N-terminal signal peptide occupies residues 1-23; it reads MAKAHSSLVFCLLALALVRFAQA. In terms of domain architecture, SCP spans 46–202; the sequence is LDFHNKFREL…WYTGYLVCNY (157 aa). N-linked (GlcNAc...) asparagine glycosylation is found at Asn106 and Asn172.

Belongs to the CRISP family. Venom allergen 5-like subfamily. Salivary gland (at protein level).

The protein localises to the secreted. In terms of biological role, inhibits host platelet aggregation induced by low doses of collagen. The chain is Salivary antigen-5 from Triatoma infestans (Assassin bug).